Reading from the N-terminus, the 424-residue chain is 3-oxo-tetronate kinase (424 aa).

Residues Ser264, 363–366, and Gly408 contribute to the ATP site; that span reads GGET.

The protein belongs to the four-carbon acid sugar kinase family.

The enzyme catalyses 3-dehydro-L-erythronate + ATP = 3-dehydro-4-O-phospho-L-erythronate + ADP + H(+). It carries out the reaction 3-dehydro-D-erythronate + ATP = 3-dehydro-4-O-phospho-D-erythronate + ADP + H(+). Functionally, catalyzes the ATP-dependent phosphorylation of 3-oxo-tetronate to 3-oxo-tetronate 4-phosphate. The sequence is that of 3-oxo-tetronate kinase from Methylobacterium radiotolerans (strain ATCC 27329 / DSM 1819 / JCM 2831 / NBRC 15690 / NCIMB 10815 / 0-1).